The following is a 521-amino-acid chain: Histone acetyltransferase ESA1 (521 aa).

The disordered stretch occupies residues 1–32 (MSVGEDKSGTATPQHNTSIRITDDEERSDEKK). The segment covering 9 to 20 (GTATPQHNTSIR) has biased composition (polar residues). The Tudor-knot domain occupies 39–90 (ITGCKLYVSKDGEYRLAEILQDHMKKGKKVFYVHYQEFNKRLDEWISADRID). The disordered stretch occupies residues 100–154 (VKVDKKDDKKEGKSKTSKKSKSKNGKTGSKSVTSTPQPNEDTAPGTPRNDDEMDL). The span at 101 to 113 (KVDKKDDKKEGKS) shows a compositional bias: basic and acidic residues. A compositionally biased stretch (basic residues) spans 114 to 123 (KTSKKSKSKN). The segment covering 124-133 (GKTGSKSVTS) has biased composition (low complexity). Residues 192–509 (ARVRNLSSVI…LDPSKLSWTP (318 aa)) form the MYST-type HAT domain. Residues 225–250 (IYICDFTLAYFGSLKQFERFRTKCSM) form a C2HC MYST-type; degenerate zinc finger. The ESA1-RPD3 motif signature appears at 275–296 (RTWCRNLCLLSKLFLDHKTLYY). At Lys292 the chain carries N6-acetyllysine; by autocatalysis. Residues 333-337 (ACILT) and 342-348 (QKMGFGK) contribute to the acetyl-CoA site. The active-site Proton donor/acceptor is Glu368. Ser372 serves as a coordination point for acetyl-CoA. Composition is skewed to polar residues over residues 403 to 418 (NNPQ…DSSV) and 426 to 436 (QSANIQNGNTP). The interval 403-438 (NNPQLLTEASSKDSSVSPPPGGRQSANIQNGNTPSS) is disordered.

This sequence belongs to the MYST (SAS/MOZ) family. In terms of assembly, component of the NuA4 histone acetyltransferase complex. In terms of processing, autoacetylation at Lys-292 is required for proper function.

It localises to the nucleus. The protein localises to the chromosome. The enzyme catalyses L-lysyl-[histone] + acetyl-CoA = N(6)-acetyl-L-lysyl-[histone] + CoA + H(+). It catalyses the reaction L-lysyl-[protein] + acetyl-CoA = N(6)-acetyl-L-lysyl-[protein] + CoA + H(+). The catalysed reaction is 2-hydroxyisobutanoyl-CoA + L-lysyl-[protein] = N(6)-(2-hydroxyisobutanoyl)-L-lysyl-[protein] + CoA + H(+). It carries out the reaction (2E)-butenoyl-CoA + L-lysyl-[protein] = N(6)-(2E)-butenoyl-L-lysyl-[protein] + CoA + H(+). Catalytic component of the NuA4 histone acetyltransferase (HAT) complex which is involved in epigenetic transcriptional activation of selected genes principally by acetylation of nucleosomal histones H4, H3, H2B, H2A and H2A variant H2A.Z. Acetylates histone H4 to form H4K5ac, H4K8ac, H4K12ac and H4K16ac, histone H3 to form H3K14ac, and histone H2A to form H2AK4ac and H2AK7ac. The NuA4 complex is involved in the DNA damage response and is required for chromosome segregation. The NuA4 complex plays a direct role in repair of DNA double-strand breaks (DSBs) through homologous recombination. Recruitment to promoters depends on H3K4me. Also acetylates non-histone proteins. In addition to protein acetyltransferase, can use different acyl-CoA substrates, such as 2-hydroxyisobutanoyl-CoA (2-hydroxyisobutyryl-CoA) or (2E)-butenoyl-CoA (crotonyl-CoA), and is able to mediate protein 2-hydroxyisobutyrylation and crotonylation, respectively. The chain is Histone acetyltransferase ESA1 (ESA1) from Debaryomyces hansenii (strain ATCC 36239 / CBS 767 / BCRC 21394 / JCM 1990 / NBRC 0083 / IGC 2968) (Yeast).